The chain runs to 460 residues: Serine--tRNA ligase (460 aa).

L-serine is bound at residue 242 to 244 (TAE). ATP contacts are provided by residues 273-275 (RRE) and Val289. Glu296 provides a ligand contact to L-serine. 369 to 372 (EVSS) serves as a coordination point for ATP. Ser405 is an L-serine binding site.

It belongs to the class-II aminoacyl-tRNA synthetase family. Type-1 seryl-tRNA synthetase subfamily. In terms of assembly, homodimer. The tRNA molecule binds across the dimer.

It is found in the cytoplasm. The catalysed reaction is tRNA(Ser) + L-serine + ATP = L-seryl-tRNA(Ser) + AMP + diphosphate + H(+). The enzyme catalyses tRNA(Sec) + L-serine + ATP = L-seryl-tRNA(Sec) + AMP + diphosphate + H(+). Its pathway is aminoacyl-tRNA biosynthesis; selenocysteinyl-tRNA(Sec) biosynthesis; L-seryl-tRNA(Sec) from L-serine and tRNA(Sec): step 1/1. In terms of biological role, catalyzes the attachment of serine to tRNA(Ser). Is also able to aminoacylate tRNA(Sec) with serine, to form the misacylated tRNA L-seryl-tRNA(Sec), which will be further converted into selenocysteinyl-tRNA(Sec). In Haloquadratum walsbyi (strain DSM 16790 / HBSQ001), this protein is Serine--tRNA ligase.